We begin with the raw amino-acid sequence, 44 residues long: Cytochrome b559 subunit beta (44 aa).

Residues 19 to 35 (WLSVHALGVPSVFFLGA) form a helical membrane-spanning segment. His23 contributes to the heme binding site.

This sequence belongs to the PsbE/PsbF family. As to quaternary structure, heterodimer of an alpha subunit and a beta subunit. PSII is composed of 1 copy each of membrane proteins PsbA, PsbB, PsbC, PsbD, PsbE, PsbF, PsbH, PsbI, PsbJ, PsbK, PsbL, PsbM, PsbT, PsbX, PsbY, PsbZ, Psb30/Ycf12, peripheral proteins PsbO, CyanoQ (PsbQ), PsbU, PsbV and a large number of cofactors. It forms dimeric complexes. The cofactor is heme b.

The protein resides in the cellular thylakoid membrane. This b-type cytochrome is tightly associated with the reaction center of photosystem II (PSII). PSII is a light-driven water:plastoquinone oxidoreductase that uses light energy to abstract electrons from H(2)O, generating O(2) and a proton gradient subsequently used for ATP formation. It consists of a core antenna complex that captures photons, and an electron transfer chain that converts photonic excitation into a charge separation. In Synechococcus elongatus (strain ATCC 33912 / PCC 7942 / FACHB-805) (Anacystis nidulans R2), this protein is Cytochrome b559 subunit beta.